The chain runs to 56 residues: uncharacterized protein (56 aa).

This is an uncharacterized protein from Borreliella burgdorferi (strain ATCC 35210 / DSM 4680 / CIP 102532 / B31) (Borrelia burgdorferi).